Reading from the N-terminus, the 380-residue chain is Tryptophan--tRNA ligase (380 aa).

Residues 81–89 (PSLGMHIGH) carry the 'HIGH' region motif. Positions 253–257 (KMSSS) match the 'KMSKS' region motif.

It belongs to the class-I aminoacyl-tRNA synthetase family.

It localises to the cytoplasm. It catalyses the reaction tRNA(Trp) + L-tryptophan + ATP = L-tryptophyl-tRNA(Trp) + AMP + diphosphate + H(+). This is Tryptophan--tRNA ligase from Saccharolobus solfataricus (strain ATCC 35092 / DSM 1617 / JCM 11322 / P2) (Sulfolobus solfataricus).